The sequence spans 585 residues: Arginine--tRNA ligase (585 aa).

The 'HIGH' region signature appears at 126–136; that stretch reads PNIAKEMHVGH.

Belongs to the class-I aminoacyl-tRNA synthetase family. As to quaternary structure, monomer.

It localises to the cytoplasm. It carries out the reaction tRNA(Arg) + L-arginine + ATP = L-arginyl-tRNA(Arg) + AMP + diphosphate. The polypeptide is Arginine--tRNA ligase (Rippkaea orientalis (strain PCC 8801 / RF-1) (Cyanothece sp. (strain PCC 8801))).